The following is a 419-amino-acid chain: Interferon regulatory factor 3 (419 aa).

Threonine 3 is modified (phosphothreonine). Positions 5 to 111 (KPRILPWLIS…DPHKIYEFVT (107 aa)) form a DNA-binding region, IRF tryptophan pentad repeat. Serine 14 is modified (phosphoserine). Threonine 75 bears the Phosphothreonine mark. Serine 97 and serine 123 each carry phosphoserine. The disordered stretch occupies residues 118–137 (PEPDTSLDLSGRYSTSDTHE). A mediates interaction with ZDHHC11 region spans residues 140–419 (LDKLLSGMDL…LRDLVEDMDF (280 aa)). A Glycyl lysine isopeptide (Lys-Gly) (interchain with G-Cter in ISG15) cross-link involves residue lysine 191. The interaction with HERC5 stretch occupies residues 198-358 (DEWEFQVTVF…SWPQDEPWVK (161 aa)). 2 positions are modified to phosphothreonine: threonine 235 and threonine 251. A disulfide bridge links cysteine 265 with cysteine 287. Residues lysine 358 and lysine 364 each participate in a glycyl lysine isopeptide (Lys-Gly) (interchain with G-Cter in ISG15) cross-link. Residue lysine 364 is modified to N6-acetyllysine. Serine 383 is modified (phosphoserine). Diphosphoserine is present on serine 384. Residue serine 384 is modified to Phosphoserine; by TBK1. Position 394 is a phosphoserine; by IKKE (serine 394). A Phosphoserine modification is found at serine 396. Threonine 402 carries the phosphothreonine modification.

The protein belongs to the IRF family. In terms of assembly, monomer. Homodimer; phosphorylation-induced. Interacts (when phosphorylated) with CREBBP. Interacts with MAVS (via phosphorylated pLxIS motif). Interacts with TICAM1 (via phosphorylated pLxIS motif). Interacts with STING1 (via phosphorylated pLxIS motif). Interacts with IKBKE and TBK1. Interacts with TICAM2. Interacts with RBCK1. Interacts with HERC5. Interacts with DDX3X; the interaction allows the phosphorylation and activation of IRF3 by IKBKE. Interacts with TRIM21 and ULK1, in the presence of TRIM21; this interaction leads to IRF3 degradation by autophagy. Interacts with RIOK3; RIOK3 probably mediates the interaction of TBK1 with IRF3. Interacts with ILRUN; the interaction inhibits IRF3 binding to its DNA consensus sequence. Interacts with LYAR; this interaction impairs IRF3 DNA-binding activity. Interacts with TRAF3. Interacts with ZDHHC11; ZDHHC11 recruits IRF3 to STING1 upon DNA virus infection and thereby promotes IRF3 activation. Interacts with HSP90AA1; the interaction mediates IRF3 association with TOMM70. Interacts with BCL2; the interaction decreases upon Sendai virus infection. Interacts with BAX; the interaction is direct, increases upon virus infection and mediates the formation of the apoptosis complex TOMM70:HSP90AA1:IRF3:BAX. Interacts with DDX56. Interacts with NBR1. As to quaternary structure, (Microbial infection) Interacts with Porcine epidemic diarrhea virus E protein; this interaction prevents IRF3 translocation to the nucleus and thereby prevents type I interferon production. (Microbial infection) Interacts with African swine fever virus (ASFV) P14.5/E120R; this interaction interferes with the recruitment of IRF3 to TBK1, which in turn suppresses IRF3 phosphorylation, decreasing interferon production via the cGAS/STING pathway. In terms of assembly, (Microbial infection) Interacts with African swine fever virus (ASFV) MGF360-14L; this interaction mediates degradation of IRF3 through TRIM21 and ubiquitin-meditated proteolysis. As to quaternary structure, (Microbial infection) Interacts with African swine fever virus (ASFV) E301R; this interaction inhibits nuclear translocation of IRF3 to the nucleus. (Microbial infection) Interacts with African swine fever virus (ASFV) minor capsid protein M1249L; this interaction mediates IRF3 degradation. Post-translationally, constitutively phosphorylated on many Ser/Thr residues. Activated following phosphorylation by TBK1 and IKBKE. Innate adapter proteins, such as MAVS, STING1 or TICAM1, are first activated by viral RNA, cytosolic DNA, and bacterial lipopolysaccharide (LPS), respectively, leading to activation of the kinases TBK1 and IKBKE. These kinases then phosphorylate the adapter proteins on the pLxIS motif, leading to recruitment of IRF3, thereby licensing IRF3 for phosphorylation by TBK1. Phosphorylation at Ser-384 is followed by pyrophosphorylation at the same residue, promoting phosphorylation at Ser-394. Phosphorylated IRF3 dissociates from the adapter proteins, dimerizes, and then enters the nucleus to induce IFNs. In terms of processing, pyrophosphorylated by UAP1 following phosphorylation at Ser-384 by TBK1. Pyrophosphorylation promotes subsequent phosphorylation at Ser-394, leading to homodimerization of IRF3. Acetylation at Lys-364 by KAT8 inhibits recruimtent to promoters and transcription factor activity. Acetylation by KAT8 is promoted by phosphorylation at Ser-394. Post-translationally, ubiquitinated; ubiquitination involves RBCK1 leading to proteasomal degradation. Polyubiquitinated; ubiquitination involves TRIM21 leading to proteasomal degradation. Ubiquitinated by UBE3C, leading to its degradation. Deubiquitinated by USP5 on both 'Lys-48'-linked unanchored and 'Lys-63'-linked anchored polyubiquitin, leading to inhibition of antiviral innate immunity. In terms of processing, ISGylated by HERC5 resulting in sustained IRF3 activation and in the inhibition of IRF3 ubiquitination by disrupting PIN1 binding. The phosphorylation state of IRF3 does not alter ISGylation. (Microbial infection) Phosphorylated by pseudorabies virus protein kinase UL13; leading to decreased IRF3 binding to the IRF3-responsive promoters and downstream ISG expression. Post-translationally, proteolytically cleaved by apoptotic caspases during apoptosis, leading to its inactivation. Cleavage by CASP3 during virus-induced apoptosis inactivates it, preventing cytokine overproduction.

It is found in the cytoplasm. The protein resides in the nucleus. It localises to the mitochondrion. With respect to regulation, in the absence of viral infection, maintained as a monomer in an autoinhibited state. Phosphorylation by TBK1 and IKBKE disrupts this autoinhibition leading to the liberation of the DNA-binding and dimerization activities and its nuclear localization where it can activate type I IFN and ISG genes. Phosphorylation and activation follow the following steps: innate adapter proteins, such as MAVS, STING1 or TICAM1, are first activated by viral RNA, cytosolic DNA and bacterial lipopolysaccharide (LPS), respectively, leading to activation of the kinases TBK1 and IKBKE. These kinases then phosphorylate the adapter proteins on their pLxIS motif, leading to recruitment of IRF3, thereby licensing IRF3 for phosphorylation by TBK1. Phosphorylated IRF3 dissociates from the adapter proteins, dimerizes, and then enters the nucleus to induce IFNs. In terms of biological role, key transcriptional regulator of type I interferon (IFN)-dependent immune responses which plays a critical role in the innate immune response against DNA and RNA viruses. Regulates the transcription of type I IFN genes (IFN-alpha and IFN-beta) and IFN-stimulated genes (ISG) by binding to an interferon-stimulated response element (ISRE) in their promoters. Acts as a more potent activator of the IFN-beta (IFNB) gene than the IFN-alpha (IFNA) gene and plays a critical role in both the early and late phases of the IFNA/B gene induction. Found in an inactive form in the cytoplasm of uninfected cells and following viral infection, double-stranded RNA (dsRNA), or toll-like receptor (TLR) signaling, is phosphorylated by IKBKE and TBK1 kinases. This induces a conformational change, leading to its dimerization and nuclear localization and association with CREB binding protein (CREBBP) to form dsRNA-activated factor 1 (DRAF1), a complex which activates the transcription of the type I IFN and ISG genes. Can activate distinct gene expression programs in macrophages and can induce significant apoptosis in primary macrophages. The chain is Interferon regulatory factor 3 (IRF3) from Sus scrofa (Pig).